Here is a 95-residue protein sequence, read N- to C-terminus: Aspartyl/glutamyl-tRNA(Asn/Gln) amidotransferase subunit C (95 aa).

The protein belongs to the GatC family. As to quaternary structure, heterotrimer of A, B and C subunits.

The catalysed reaction is L-glutamyl-tRNA(Gln) + L-glutamine + ATP + H2O = L-glutaminyl-tRNA(Gln) + L-glutamate + ADP + phosphate + H(+). It carries out the reaction L-aspartyl-tRNA(Asn) + L-glutamine + ATP + H2O = L-asparaginyl-tRNA(Asn) + L-glutamate + ADP + phosphate + 2 H(+). Functionally, allows the formation of correctly charged Asn-tRNA(Asn) or Gln-tRNA(Gln) through the transamidation of misacylated Asp-tRNA(Asn) or Glu-tRNA(Gln) in organisms which lack either or both of asparaginyl-tRNA or glutaminyl-tRNA synthetases. The reaction takes place in the presence of glutamine and ATP through an activated phospho-Asp-tRNA(Asn) or phospho-Glu-tRNA(Gln). The protein is Aspartyl/glutamyl-tRNA(Asn/Gln) amidotransferase subunit C of Methylobacterium sp. (strain 4-46).